Consider the following 365-residue polypeptide: Flagellar P-ring protein (365 aa).

Residues Met1–Ala19 form the signal peptide.

It belongs to the FlgI family. The basal body constitutes a major portion of the flagellar organelle and consists of four rings (L,P,S, and M) mounted on a central rod.

It is found in the periplasm. The protein localises to the bacterial flagellum basal body. Functionally, assembles around the rod to form the L-ring and probably protects the motor/basal body from shearing forces during rotation. This Shigella dysenteriae serotype 1 (strain Sd197) protein is Flagellar P-ring protein.